The following is a 197-amino-acid chain: dITP/XTP pyrophosphatase (197 aa).

Residue 8–13 (TGNPGK) participates in substrate binding. Residues E40 and D69 each contribute to the Mg(2+) site. The Proton acceptor role is filled by D69. Substrate contacts are provided by residues S70, 154–157 (FGYD), K177, and 182–183 (HR).

It belongs to the HAM1 NTPase family. In terms of assembly, homodimer. Requires Mg(2+) as cofactor.

The catalysed reaction is XTP + H2O = XMP + diphosphate + H(+). It carries out the reaction dITP + H2O = dIMP + diphosphate + H(+). The enzyme catalyses ITP + H2O = IMP + diphosphate + H(+). Its function is as follows. Pyrophosphatase that catalyzes the hydrolysis of nucleoside triphosphates to their monophosphate derivatives, with a high preference for the non-canonical purine nucleotides XTP (xanthosine triphosphate), dITP (deoxyinosine triphosphate) and ITP. Seems to function as a house-cleaning enzyme that removes non-canonical purine nucleotides from the nucleotide pool, thus preventing their incorporation into DNA/RNA and avoiding chromosomal lesions. This is dITP/XTP pyrophosphatase from Yersinia pestis.